A 117-amino-acid chain; its full sequence is Flagellar transcriptional regulator FlhD (117 aa).

Belongs to the FlhD family. As to quaternary structure, homodimer; disulfide-linked. Forms a heterohexamer composed of two FlhC and four FlhD subunits. Each FlhC binds a FlhD dimer, forming a heterotrimer, and a hexamer assembles by dimerization of two heterotrimers.

Its subcellular location is the cytoplasm. Its function is as follows. Functions in complex with FlhC as a master transcriptional regulator that regulates transcription of several flagellar and non-flagellar operons by binding to their promoter region. Activates expression of class 2 flagellar genes, including fliA, which is a flagellum-specific sigma factor that turns on the class 3 genes. Also regulates genes whose products function in a variety of physiological pathways. This chain is Flagellar transcriptional regulator FlhD, found in Erwinia amylovora (strain CFBP1430).